The sequence spans 168 residues: Zinc finger A20 and AN1 domain-containing stress-associated protein 1 (168 aa).

Residues 13–47 (PSEPKLCVKGCGFFGSPSNMNLCSKCYRDIRATEE) form an A20-type zinc finger. Residues Cys-19, Cys-23, Cys-35, and Cys-38 each contribute to the Zn(2+) site. Positions 49-105 (TASAKAAVEKSLNPNKPKTQPQQSQEITQGVLGSGSSSSSTRGGDSAAAPLDPPKST) are disordered. A compositionally biased stretch (polar residues) spans 60–76 (LNPNKPKTQPQQSQEIT). The span at 82–94 (SGSSSSSTRGGDS) shows a compositional bias: low complexity. Residues 103-149 (KSTATRCLSCNKKVGVTGFKCRCGSTFCGTHRYPESHECQFDFKGVA) form an AN1-type zinc finger. Zn(2+) is bound by residues Cys-109, Cys-112, Cys-123, Cys-125, Cys-130, His-133, His-139, and Cys-141.

Functionally, may be involved in environmental stress response. The chain is Zinc finger A20 and AN1 domain-containing stress-associated protein 1 (SAP1) from Arabidopsis thaliana (Mouse-ear cress).